Consider the following 546-residue polypeptide: Probable ATP-dependent RNA helicase DDX56 (546 aa).

A Q motif motif is present at residues 7 to 35 (LGFEHMGLDPRLLQAVTDLGWSRPTLIQE). Residues 38 to 218 (IPLALEGKDL…ELVLHNPVTL (181 aa)) form the Helicase ATP-binding domain. 51–58 (ARTGSGKT) provides a ligand contact to ATP. The residue at position 126 (Ser-126) is a Phosphoserine. Thr-141 is subject to Phosphothreonine. The short motif at 166–169 (DEAD) is the DEAD box element. Residues 230–424 (QLQQFQVVCE…PYQFQMEEIE (195 aa)) enclose the Helicase C-terminal domain. Disordered stretches follow at residues 324 to 344 (VKGK…PESG) and 508 to 546 (RKKR…AKPS). 3 stretches are compositionally biased toward basic residues: residues 325-334 (KGKRRGRGSK), 508-524 (RKKR…KKVK), and 532-546 (FKHR…AKPS).

Belongs to the DEAD box helicase family. DDX56/DBP9 subfamily. May form homooligomeric complexes. Interacts with IRF3. Interacts with OCT4 and POU5F1.

It is found in the nucleus. The protein localises to the nucleolus. It carries out the reaction ATP + H2O = ADP + phosphate + H(+). Functionally, nucleolar RNA helicase that plays a role in various biological processes including innate immunity, ribosome biogenesis or nucleolus organization. Plays an essential role in maintaining nucleolar integrity in planarian stem cells. Maintains embryonic stem cells proliferation by conventional regulation of ribosome assembly and interaction with OCT4 and POU5F1 complex. Regulates antiviral innate immunity by inhibiting the virus-triggered signaling nuclear translocation of IRF3. Mechanistically, acts by disrupting the interaction between IRF3 and importin IPO5. May play a role in later stages of the processing of the pre-ribosomal particles leading to mature 60S ribosomal subunits. Has intrinsic ATPase activity. This is Probable ATP-dependent RNA helicase DDX56 (Ddx56) from Mus musculus (Mouse).